We begin with the raw amino-acid sequence, 141 residues long: Hemoglobin subunit alpha (141 aa).

Residues 1–141 form the Globin domain; that stretch reads VLSPADKSNV…VSTVLTSKYR (141 aa). Ser-3 carries the phosphoserine modification. An N6-succinyllysine mark is found at Lys-7 and Lys-11. At Lys-16 the chain carries N6-acetyllysine; alternate. The residue at position 16 (Lys-16) is an N6-succinyllysine; alternate. Tyr-24 carries the post-translational modification Phosphotyrosine. At Ser-35 the chain carries Phosphoserine. The residue at position 40 (Lys-40) is an N6-succinyllysine. Ser-49 is modified (phosphoserine). O2 is bound at residue His-58. His-87 contributes to the heme b binding site. Position 102 is a phosphoserine (Ser-102). A Phosphothreonine modification is found at Thr-108. 2 positions are modified to phosphoserine: Ser-124 and Ser-131. Thr-134 and Thr-137 each carry phosphothreonine. Residue Ser-138 is modified to Phosphoserine.

This sequence belongs to the globin family. Heterotetramer of two alpha chains and two beta chains. Red blood cells.

Functionally, involved in oxygen transport from the lung to the various peripheral tissues. Its function is as follows. Hemopressin acts as an antagonist peptide of the cannabinoid receptor CNR1. Hemopressin-binding efficiently blocks cannabinoid receptor CNR1 and subsequent signaling. The protein is Hemoglobin subunit alpha (HBA) of Saguinus oedipus (Cotton-top tamarin).